The chain runs to 216 residues: Large ribosomal subunit protein eL15 (216 aa).

This sequence belongs to the eukaryotic ribosomal protein eL15 family.

The polypeptide is Large ribosomal subunit protein eL15 (Metallosphaera sedula (strain ATCC 51363 / DSM 5348 / JCM 9185 / NBRC 15509 / TH2)).